We begin with the raw amino-acid sequence, 263 residues long: Putative hydro-lyase Pden_0321 (263 aa).

Belongs to the D-glutamate cyclase family.

This is Putative hydro-lyase Pden_0321 from Paracoccus denitrificans (strain Pd 1222).